Here is a 389-residue protein sequence, read N- to C-terminus: Phospho-N-acetylmuramoyl-pentapeptide-transferase (389 aa).

10 helical membrane-spanning segments follow: residues 25 to 45 (RAVM…PAVI), 73 to 93 (TMGG…WADL), 97 to 117 (FIWI…VDDY), 135 to 155 (FWQS…VSEA), 190 to 210 (ISYP…IVGA), 222 to 242 (GLVI…AYVM), 259 to 279 (AGEL…FLWF), 287 to 307 (FMGD…AVIV), 311 to 331 (IVLF…MLQV), and 366 to 386 (QVVV…LSTL).

This sequence belongs to the glycosyltransferase 4 family. MraY subfamily. It depends on Mg(2+) as a cofactor.

The protein resides in the cell inner membrane. The catalysed reaction is UDP-N-acetyl-alpha-D-muramoyl-L-alanyl-gamma-D-glutamyl-meso-2,6-diaminopimeloyl-D-alanyl-D-alanine + di-trans,octa-cis-undecaprenyl phosphate = di-trans,octa-cis-undecaprenyl diphospho-N-acetyl-alpha-D-muramoyl-L-alanyl-D-glutamyl-meso-2,6-diaminopimeloyl-D-alanyl-D-alanine + UMP. It functions in the pathway cell wall biogenesis; peptidoglycan biosynthesis. In terms of biological role, catalyzes the initial step of the lipid cycle reactions in the biosynthesis of the cell wall peptidoglycan: transfers peptidoglycan precursor phospho-MurNAc-pentapeptide from UDP-MurNAc-pentapeptide onto the lipid carrier undecaprenyl phosphate, yielding undecaprenyl-pyrophosphoryl-MurNAc-pentapeptide, known as lipid I. This chain is Phospho-N-acetylmuramoyl-pentapeptide-transferase, found in Paraburkholderia phytofirmans (strain DSM 17436 / LMG 22146 / PsJN) (Burkholderia phytofirmans).